Consider the following 92-residue polypeptide: Ferredoxin-like protein in nif region (92 aa).

2 4Fe-4S ferredoxin-type domains span residues 2 to 28 (ALKI…SLAG) and 29 to 65 (PHFE…LADG). [4Fe-4S] cluster is bound by residues cysteine 9, cysteine 12, cysteine 15, cysteine 19, cysteine 38, cysteine 41, cysteine 50, and cysteine 54.

Requires [4Fe-4S] cluster as cofactor.

Its function is as follows. Ferredoxins are iron-sulfur proteins that transfer electrons in a wide variety of metabolic reactions. The sequence is that of Ferredoxin-like protein in nif region from Azotobacter vinelandii.